The sequence spans 415 residues: Casein kinase 1-like protein 3 (415 aa).

The region spanning 9–277 (YKLGRKIGGG…FLKRLFRDLF (269 aa)) is the Protein kinase domain. Residues 15–23 (IGGGSFGEI) and Lys-38 each bind ATP. Asp-128 (proton acceptor) is an active-site residue. Composition is skewed to polar residues over residues 303 to 314 (NQSQAVPGSSNP) and 373 to 415 (NMPS…SPEK). Disordered regions lie at residues 303 to 330 (NQSQ…GPNI) and 344 to 415 (NAIG…SPEK).

This sequence belongs to the protein kinase superfamily. CK1 Ser/Thr protein kinase family. Casein kinase I subfamily. Slightly autophosphorylated. Expressed in seedlings, stems, leaves and flowers.

It localises to the cytoplasm. The protein resides in the nucleus. It catalyses the reaction L-seryl-[protein] + ATP = O-phospho-L-seryl-[protein] + ADP + H(+). It carries out the reaction L-threonyl-[protein] + ATP = O-phospho-L-threonyl-[protein] + ADP + H(+). Functionally, protein kinase involved in blue light responses (e.g. hypocotyl elongation and flowering) by phosphorylating CRY2 to reduce its stability. The polypeptide is Casein kinase 1-like protein 3 (Arabidopsis thaliana (Mouse-ear cress)).